A 161-amino-acid chain; its full sequence is Ribosome maturation factor RimP (161 aa).

Belongs to the RimP family.

Its subcellular location is the cytoplasm. In terms of biological role, required for maturation of 30S ribosomal subunits. This chain is Ribosome maturation factor RimP, found in Rickettsia typhi (strain ATCC VR-144 / Wilmington).